Consider the following 1272-residue polypeptide: AF4/FMR2 family member 2 (1272 aa).

Disordered regions lie at residues 93–183 and 200–223; these read IPKN…LTQD and PQIGEVEESNPSAKEDSNPKSSGE. Residues 97–107 show a composition bias toward polar residues; that stretch reads SVPQNPNNKNE. The segment covering 151 to 160 has biased composition (basic and acidic residues); sequence SKPEWSRDSH. The segment covering 161 to 183 has biased composition (polar residues); the sequence is NPSTVLASQASGQPNKMQTLTQD. Residues 212-223 show a composition bias toward basic and acidic residues; the sequence is AKEDSNPKSSGE. Residue serine 391 is modified to Phosphoserine. 4 disordered regions span residues 418–491, 535–687, 779–829, and 842–903; these read KAKP…KWQL, TNAS…DQEE, SLHA…PEKK, and PPCI…QDKN. The segment covering 426 to 438 has biased composition (pro residues); sequence VNPPLATPQPPPA. Positions 439 to 452 are enriched in low complexity; the sequence is VQASGGSGSSSESE. Phosphothreonine is present on threonine 478. Residues 543-558 show a composition bias toward basic and acidic residues; sequence EPKERPLLSLIREKAR. Positions 576-586 are enriched in polar residues; that stretch reads STTSETVSQRT. Over residues 616-629 the composition is skewed to basic and acidic residues; that stretch reads PKEKESVELHDPPR. Positions 630 to 640 are enriched in basic residues; that stretch reads GRNKATAHKPA. Residues 818–829 show a composition bias toward basic and acidic residues; it reads PTEVAEKIPEKK. 2 stretches are compositionally biased toward pro residues: residues 844-853 and 874-883; these read CISPAPPHKP and FPPPLSPLPE.

The protein belongs to the AF4 family.

It is found in the nucleus speckle. RNA-binding protein. Might be involved in alternative splicing regulation through an interaction with G-quartet RNA structure. The polypeptide is AF4/FMR2 family member 2 (AFF2) (Pongo pygmaeus (Bornean orangutan)).